The following is a 2871-amino-acid chain: Desmoplakin (2871 aa).

Residues 1-584 (MSCNGGSHPR…DYMKTIADLE (584 aa)) are interaction with PKP1, JUP, PKP2. The tract at residues 1–1056 (MSCNGGSHPR…ANSENCNKNK (1056 aa)) is globular 1. Serine 22 and serine 53 each carry phosphoserine. A Phosphotyrosine modification is found at tyrosine 56. Threonine 61 carries the post-translational modification Phosphothreonine. Serine 165, serine 166, and serine 176 each carry phosphoserine. Spectrin repeat units lie at residues 178–271 (SGWD…HLRQ) and 272–375 (LQNI…LKEN). One copy of the Spectrin 3a repeat lies at 376 to 446 (AAYFQFFEEA…NLVNKSKKIV (71 aa)). The 58-residue stretch at 458 to 515 (NKPIILRALCDYKQDQKIVHKGDECILKDNNERSKWYVTGPGGVDMLVPSVGLIIPPP) folds into the SH3 domain. Residues 516-545 (NPLAVDLSCKIEQYYEAILALWNQLYINMK) form a Spectrin 3b repeat. 3 Spectrin repeats span residues 546–627 (SLVS…IQLP), 654–769 (VIET…SLCT), and 770–883 (VRAL…DLEK). Residues 1018 to 1945 (SEMLKSLEDL…QREIDKLRQR (928 aa)) adopt a coiled-coil conformation. A central fibrous rod domain region spans residues 1057–1945 (FLDQNLQKYQ…QREIDKLRQR (889 aa)). Phosphoserine is present on residues serine 1658, serine 1708, and serine 2024. Residues 1946 to 2871 (PYGSHRETQT…YSFSSSSIGH (926 aa)) form a globular 2 region. The tract at residues 1960-2208 (TVDTSKLVFD…LLLSVQKRSM (249 aa)) is 4.5 X 38 AA tandem repeats (Domain A). Plectin repeat units follow at residues 2009-2045 (QPFL…PEST), 2046-2083 (VMLL…FDDR), 2084-2121 (QQIY…RETG), 2122-2159 (MRLL…RDLY), 2163-2197 (NDPR…PHTG), 2198-2233 (LLLL…PSTV), 2251-2288 (KDFL…PGTA), 2289-2326 (LELL…IEFK), 2327-2364 (EKLL…KGHG), 2365-2402 (IRLL…EELS), 2406-2440 (SDPS…EETG), 2456-2493 (SQKN…YETF), 2507-2544 (TITG…RKFF), 2610-2647 (SDTL…SITG), 2648-2685 (QRLL…QDMA), 2724-2761 (QRFL…GRAA), and 2762-2799 (QRLQ…DITG). A phosphoserine mark is found at serine 2207, serine 2209, and serine 2225. The 4.5 X 38 AA tandem repeats (Domain B) stretch occupies residues 2244 to 2446 (DEVGERIKDF…EETGLCLLPL (203 aa)). The tract at residues 2609–2822 (FSDTLEESSP…LPSPYNMSSA (214 aa)) is 4.5 X 38 AA tandem repeats (Domain C). 2 positions are modified to phosphoserine: serine 2810 and serine 2815. Over residues 2810 to 2823 (SKGLPSPYNMSSAP) the composition is skewed to polar residues. The segment at 2810 to 2871 (SKGLPSPYNM…YSFSSSSIGH (62 aa)) is disordered. Phosphotyrosine is present on tyrosine 2817. Phosphoserine is present on residues serine 2820, serine 2821, and serine 2825. The 6 X 4 AA tandem repeats of G-S-R-[SR] stretch occupies residues 2824-2847 (GSRSGSRSGSRSGSRSGSRSGSRR). Positions 2824–2847 (GSRSGSRSGSRSGSRSGSRSGSRR) are enriched in low complexity. Residues arginine 2826 and arginine 2847 each carry the omega-N-methylarginine modification. The residue at position 2849 (serine 2849) is a Phosphoserine. Threonine 2853 carries the post-translational modification Phosphothreonine. Low complexity predominate over residues 2856–2871 (SSYSYSYSFSSSSIGH). At serine 2868 the chain carries Phosphoserine.

Belongs to the plakin or cytolinker family. In terms of assembly, homodimer. Interacts with COL17A1 (via cytoplasmic region). Interacts with DSC2. Interacts with PKP2. Interacts with PKP1. Interacts weakly with TMEM65. Post-translationally, phosphorylation at Ser-2849 increases association with intermediate filament cytokeratin, potentially facilitating interaction between desmosome junctions and intermediate filament architecture. In terms of tissue distribution, expressed in oral mucosa (at protein level). Expressed in arrector pili muscle (at protein level). Expressed in the heart in the heart (at protein level). As to expression, apparently an obligate constituent of all desmosomes. Resides predominantly in tissues and cells of stratified origin.

Its subcellular location is the cell junction. It localises to the desmosome. The protein localises to the cell membrane. The protein resides in the cytoplasm. Functionally, major high molecular weight protein of desmosomes. Regulates profibrotic gene expression in cardiomyocytes via activation of the MAPK14/p38 MAPK signaling cascade and increase in TGFB1 protein abundance. The protein is Desmoplakin (DSP) of Homo sapiens (Human).